The primary structure comprises 199 residues: Protein extra-macrochaetae (199 aa).

In terms of domain architecture, bHLH spans 23–75 (RIQRHPTHRGDGENAEMKMYLSKLKDLVPFMPKNRKLTKLEIIQHVIDYICDL). Ser106 bears the Phosphoserine mark. Residues 127–199 (RLNAEQPAKV…QNAEKDSRQS (73 aa)) form a disordered region. A compositionally biased stretch (low complexity) spans 161–182 (QQHQQQQQLQLQQQQLQSQQQL).

As to quaternary structure, heterodimer with other HLH proteins.

It localises to the nucleus. Participates in sensory organ patterning by antagonizing the neurogenic activity of the Achaete-scute complex (AS-C). It lacks a basic DNA-binding domain but is able to form heterodimers with other HLH proteins, thereby inhibiting DNA binding. May sequester proneural proteins in complexes inefficient for DNA interaction. EMC also affects vein differentiation. Inhibits the activity of AS-C proteins by forming an non-DNA binding heterodimer. This chain is Protein extra-macrochaetae (emc), found in Drosophila melanogaster (Fruit fly).